A 254-amino-acid polypeptide reads, in one-letter code: tRNA (guanine-N(1)-)-methyltransferase (254 aa).

S-adenosyl-L-methionine-binding positions include glycine 117 and 136–141 (LGDFVL).

The protein belongs to the RNA methyltransferase TrmD family. Homodimer.

Its subcellular location is the cytoplasm. The catalysed reaction is guanosine(37) in tRNA + S-adenosyl-L-methionine = N(1)-methylguanosine(37) in tRNA + S-adenosyl-L-homocysteine + H(+). In terms of biological role, specifically methylates guanosine-37 in various tRNAs. In Levilactobacillus brevis (strain ATCC 367 / BCRC 12310 / CIP 105137 / JCM 1170 / LMG 11437 / NCIMB 947 / NCTC 947) (Lactobacillus brevis), this protein is tRNA (guanine-N(1)-)-methyltransferase.